The primary structure comprises 122 residues: Acidic phospholipase A2 homolog vipoxin A chain (122 aa).

Cystine bridges form between Cys-26-Cys-115, Cys-28-Cys-44, Cys-43-Cys-95, Cys-49-Cys-122, Cys-50-Cys-88, Cys-57-Cys-81, and Cys-75-Cys-86.

The protein belongs to the phospholipase A2 family. Group II subfamily. D49 sub-subfamily. In terms of assembly, heterodimer of A and B (AC P14420) chains; non-covalently linked. The A chain (acidic) is non-toxic, and increases the toxicity of the B chain (basic). The A chain may act as factor stabilizing the complex structure and hence retaining its toxicity by preventing non-specific binding. Upon binding to the target membranes the A chain may dissociate. Expressed by the venom gland.

It localises to the secreted. In terms of biological role, heterodimer: postsynaptic neurotoxin. Its function is as follows. Monomer: Acidic phospholipase A2 homolog that is non-toxic. The sequence is that of Acidic phospholipase A2 homolog vipoxin A chain from Vipera ammodytes meridionalis (Eastern sand viper).